The sequence spans 260 residues: Global transcriptional regulator CodY (260 aa).

The tract at residues 1 to 159 is GAF domain; the sequence is MPNLLEKTRK…SSTVVGIQLL (159 aa). A DNA-binding region (H-T-H motif) is located at residues 207–226; it reads ASVIADRIGITRSVIVNALR.

Belongs to the CodY family.

It is found in the cytoplasm. Functionally, DNA-binding global transcriptional regulator which is involved in the adaptive response to starvation and acts by directly or indirectly controlling the expression of numerous genes in response to nutrient availability. During rapid exponential growth, CodY is highly active and represses genes whose products allow adaptation to nutrient depletion. This Streptococcus uberis (strain ATCC BAA-854 / 0140J) protein is Global transcriptional regulator CodY.